The chain runs to 137 residues: Putative pre-16S rRNA nuclease (137 aa).

It belongs to the YqgF nuclease family.

The protein localises to the cytoplasm. Functionally, could be a nuclease involved in processing of the 5'-end of pre-16S rRNA. The polypeptide is Putative pre-16S rRNA nuclease (Buchnera aphidicola subsp. Baizongia pistaciae (strain Bp)).